Consider the following 86-residue polypeptide: Small ribosomal subunit protein bS18 (86 aa).

It belongs to the bacterial ribosomal protein bS18 family. In terms of assembly, part of the 30S ribosomal subunit. Forms a tight heterodimer with protein bS6.

In terms of biological role, binds as a heterodimer with protein bS6 to the central domain of the 16S rRNA, where it helps stabilize the platform of the 30S subunit. The polypeptide is Small ribosomal subunit protein bS18 (Protochlamydia amoebophila (strain UWE25)).